Consider the following 293-residue polypeptide: uncharacterized protein (293 aa).

A coiled-coil region spans residues 65-89; that stretch reads LQKYLENIKNKKLNLNKQSNNQTNN. Residues 81–112 are disordered; the sequence is KQSNNQTNNQTNNQTNNQTNNQTNNIRPQINN.

The protein resides in the virion. This is an uncharacterized protein from Acanthamoeba polyphaga mimivirus (APMV).